The following is a 110-amino-acid chain: U1-lycotoxin-Ls1bb (110 aa).

The first 20 residues, 1–20 (MKFVLLFGVLLVTLFSYSSA), serve as a signal peptide directing secretion. A propeptide spanning residues 21–44 (EMLDDFDQADEDELLSLIEKEEAR) is cleaved from the precursor. 4 cysteine pairs are disulfide-bonded: Cys-47-Cys-62, Cys-54-Cys-71, Cys-61-Cys-89, and Cys-73-Cys-87.

It belongs to the neurotoxin 19 (CSTX) family. 03 subfamily. Expressed by the venom gland.

It is found in the secreted. In Lycosa singoriensis (Wolf spider), this protein is U1-lycotoxin-Ls1bb.